The chain runs to 525 residues: GMP synthase [glutamine-hydrolyzing] (525 aa).

The 200-residue stretch at K8 to N207 folds into the Glutamine amidotransferase type-1 domain. The Nucleophile role is filled by C85. Active-site residues include H181 and E183. The 193-residue stretch at W208–R400 folds into the GMPS ATP-PPase domain. S235 to S241 contributes to the ATP binding site.

In terms of assembly, homodimer.

The catalysed reaction is XMP + L-glutamine + ATP + H2O = GMP + L-glutamate + AMP + diphosphate + 2 H(+). Its pathway is purine metabolism; GMP biosynthesis; GMP from XMP (L-Gln route): step 1/1. In terms of biological role, catalyzes the synthesis of GMP from XMP. The protein is GMP synthase [glutamine-hydrolyzing] of Shewanella oneidensis (strain ATCC 700550 / JCM 31522 / CIP 106686 / LMG 19005 / NCIMB 14063 / MR-1).